Consider the following 494-residue polypeptide: Zinc metalloproteinase/disintegrin (494 aa).

Positions 1–20 (MIQVLLVTICLAVFPFQGSS) are cleaved as a signal peptide. Positions 21 to 193 (KTLKSGNVND…KKASHLVATS (173 aa)) are excised as a propeptide. The Peptidase M12B domain occupies 201–396 (RYVQLVIVAD…HNPPCILNQA (196 aa)). 3 disulfides stabilise this stretch: cysteine 311-cysteine 391, cysteine 351-cysteine 375, and cysteine 353-cysteine 358. A Zn(2+)-binding site is contributed by histidine 336. The active site involves glutamate 337. Residues histidine 340 and histidine 346 each contribute to the Zn(2+) site. Positions 410 to 431 (ELLQNSVNPCYDPVTCQPKEKE) are excised as a propeptide. Positions 417 to 478 (NPCYDPVTCQ…DCPRNPYKGE (62 aa)) constitute a Disintegrin domain. Intrachain disulfides connect cysteine 433/cysteine 442, cysteine 438/cysteine 463, cysteine 439/cysteine 468, and cysteine 451/cysteine 470. Residues 455 to 457 (RGD) carry the Cell attachment site motif. Residues 482–494 (MEWPAPAKGSVLM) constitute a propeptide that is removed on maturation.

The protein belongs to the venom metalloproteinase (M12B) family. P-II subfamily. P-IIa sub-subfamily. Monomer (disintegrin). In terms of tissue distribution, expressed by the venom gland.

Its subcellular location is the secreted. In terms of biological role, impairs hemostasis in the envenomed animal. Functionally, inhibits ADP-induced platelet aggregation (IC(50)=168 nM). Inhibits alpha-5/beta-1 (ITGA5/ITGB1) integrin and induces the expression of a ligand-induced binding site epitope on beta-1 integrin subunit. Has a direct chemotactic stimulus on human neutrophils in vitro. This is Zinc metalloproteinase/disintegrin from Echis ocellatus (Ocellated saw-scaled viper).